The following is a 323-amino-acid chain: Sphingolipid delta(4)-desaturase DES1 (323 aa).

Glycine 2 carries the N-myristoyl glycine lipid modification. A run of 2 helical transmembrane segments spans residues 41-61 (PNLI…FYLV) and 68-88 (WLMF…TLAI). The Histidine box-1 signature appears at 89–93 (HEISH). A helical transmembrane segment spans residues 104–124 (WNRWFGMFANLSLGVPYSISF). Positions 128–132 (HMDHH) match the Histidine box-2 motif. 3 helical membrane passes run 152 to 172 (FFCT…FYAF), 184 to 204 (HLEV…YYVF), and 210 to 230 (VYML…GHFI). The short motif at 259–263 (HNEHH) is the Histidine box-3 element. Serine 307 is subject to Phosphoserine.

The protein belongs to the fatty acid desaturase type 1 family. DEGS subfamily. In terms of assembly, interacts with RLBP1; the interaction increases synthesis of chromophore-precursors by DEGS1. In terms of processing, myristoylation can target the enzyme to the mitochondria leading to an increase in ceramide levels.

The protein localises to the mitochondrion membrane. It is found in the endoplasmic reticulum membrane. The enzyme catalyses an N-acylsphinganine + 2 Fe(II)-[cytochrome b5] + O2 + 2 H(+) = an N-acylsphing-4-enine + 2 Fe(III)-[cytochrome b5] + 2 H2O. It catalyses the reaction all-trans-retinol = 11-cis-retinol. The catalysed reaction is all-trans-retinol = 9-cis-retinol. It carries out the reaction all-trans-retinol = 13-cis-retinol. The enzyme catalyses 11-cis-retinol = 13-cis-retinol. It catalyses the reaction 11-cis-retinol = 9-cis-retinol. Has sphingolipid-delta-4-desaturase activity. Converts D-erythro-sphinganine to D-erythro-sphingosine (E-sphing-4-enine). Catalyzes the equilibrium isomerization of retinols. This is Sphingolipid delta(4)-desaturase DES1 from Rattus norvegicus (Rat).